The chain runs to 731 residues: Gene 24 protein (731 aa).

Belongs to the herpesviridae UL87 family.

The polypeptide is Gene 24 protein (24) (Saimiri sciureus (Common squirrel monkey)).